The sequence spans 1358 residues: Tenascin-R (1358 aa).

The first 31 residues, 1 to 31 (MGADGETVVLKNMLIGINLILLGSMIKPSEC), serve as a signal peptide directing secretion. O-linked (GalNAc...) threonine glycosylation is found at Thr-36 and Thr-37. N-linked (GlcNAc...) asparagine glycosylation occurs at Asn-55. The stretch at 127 to 157 (CASSAQVLQELLSRIEMLEREVSVLRDQCNA) forms a coiled coil. A glycan (O-linked (Xyl...) (chondroitin sulfate) serine) is linked at Ser-176. Asn-180 and Asn-198 each carry an N-linked (GlcNAc...) asparagine glycan. EGF-like domains lie at 188 to 199 (CICNEGWFGKNC), 219 to 230 (CICDSEYSGDDC), and 250 to 261 (CVCEEPYTGEDC). An O-linked (Xyl...) (chondroitin sulfate) serine glycan is attached at Ser-271. A glycan (N-linked (GlcNAc...) asparagine) is linked at Asn-278. Positions 281 to 292 (CLCEEGYVGEDC) constitute an EGF-like 4 domain. Intrachain disulfides connect Cys-292–Cys-301, Cys-297–Cys-312, and Cys-314–Cys-323. A glycan (O-linked (Xyl...) (chondroitin sulfate) serine) is linked at Ser-302. The EGF-like 5 domain occupies 312–323 (CVCEEGYQGPDC). Fibronectin type-III domains lie at 328 to 420 (PPED…TPQG), 421 to 505 (LQFK…TVID), 506 to 595 (GPTQ…TEID), 596 to 687 (APKN…TELD), 688 to 777 (SPRD…FRPI), 778 to 865 (SHLH…TGID), 866 to 955 (PPKD…AMDN), 956 to 1042 (PVDL…TLLD), and 1043 to 1130 (PPAN…TGGR). Residues Asn-392, Asn-470, and Asn-581 are each glycosylated (N-linked (GlcNAc...) asparagine). Ser-724 carries the post-translational modification Phosphoserine. Asn-791, Asn-874, Asn-1036, Asn-1046, and Asn-1261 each carry an N-linked (GlcNAc...) asparagine glycan. The Fibrinogen C-terminal domain occupies 1129 to 1344 (GRVFPHPQDC…FVEMKMRPYN (216 aa)).

Belongs to the tenascin family. In terms of assembly, forms oligomers. Interacts with CNTN1, TNC, and FN1. Interacts with BCAN and ACAN in a calcium-dependent manner. Interacts with SCN2B, PTPRZ1, and CSPG3. Post-translationally, contains N-linked oligosaccharides, O-linked sialylated structures and O-linked chondroitin sulfate glycosaminoglycans. Contains N-linked oligosaccharides with a sulfated carbohydrate structure. O-glycosylated on Thr-36 or Thr-37 with a core 1 or possibly core 8 glycan. As to expression, brain specific.

It localises to the secreted. It is found in the extracellular space. The protein resides in the extracellular matrix. Functionally, neural extracellular matrix (ECM) protein involved in interactions with different cells and matrix components. These interactions can influence cellular behavior by either evoking a stable adhesion and differentiation, or repulsion and inhibition of neurite growth. Binding to cell surface gangliosides inhibits RGD-dependent integrin-mediated cell adhesion and results in an inhibition of PTK2/FAK1 (FAK) phosphorylation and cell detachment. Binding to membrane surface sulfatides results in a oligodendrocyte adhesion and differentiation. Interaction with CNTN1 induces a repulsion of neurons and an inhibition of neurite outgrowth. Interacts with SCN2B may play a crucial role in clustering and regulation of activity of sodium channels at nodes of Ranvier. TNR-linked chondroitin sulfate glycosaminoglycans are involved in the interaction with FN1 and mediate inhibition of cell adhesion and neurite outgrowth. The highly regulated addition of sulfated carbohydrate structure may modulate the adhesive properties of TNR over the course of development and during synapse maintenance. This is Tenascin-R (TNR) from Homo sapiens (Human).